Consider the following 417-residue polypeptide: Serine hydroxymethyltransferase (417 aa).

(6S)-5,6,7,8-tetrahydrofolate is bound by residues Leu121 and 125 to 127 (GHL). N6-(pyridoxal phosphate)lysine is present on Lys229. 355 to 357 (SPF) contacts (6S)-5,6,7,8-tetrahydrofolate.

This sequence belongs to the SHMT family. As to quaternary structure, homodimer. It depends on pyridoxal 5'-phosphate as a cofactor.

The protein localises to the cytoplasm. The enzyme catalyses (6R)-5,10-methylene-5,6,7,8-tetrahydrofolate + glycine + H2O = (6S)-5,6,7,8-tetrahydrofolate + L-serine. It participates in one-carbon metabolism; tetrahydrofolate interconversion. It functions in the pathway amino-acid biosynthesis; glycine biosynthesis; glycine from L-serine: step 1/1. Its function is as follows. Catalyzes the reversible interconversion of serine and glycine with tetrahydrofolate (THF) serving as the one-carbon carrier. This reaction serves as the major source of one-carbon groups required for the biosynthesis of purines, thymidylate, methionine, and other important biomolecules. Also exhibits THF-independent aldolase activity toward beta-hydroxyamino acids, producing glycine and aldehydes, via a retro-aldol mechanism. This chain is Serine hydroxymethyltransferase, found in Xanthomonas axonopodis pv. citri (strain 306).